The following is a 441-amino-acid chain: Plasmepsin VI (441 aa).

Over 1–7 (MTNFCIK) the chain is Cytoplasmic. The helical; Signal-anchor for type II membrane protein transmembrane segment at 8–28 (SYLFLYLSFLLFFDIITIFHV) threads the bilayer. At 29–441 (SSIRISTVLK…VGVVKSNHNF (413 aa)) the chain is on the extracellular side. The 327-residue stretch at 109–435 (FIGDIEIGNP…DNDHKLVGVV (327 aa)) folds into the Peptidase A1 domain. Active-site residues include Asp-127 and Asp-324.

It belongs to the peptidase A1 family.

The protein localises to the membrane. Functionally, during the development in the mosquito midgut, plays a role in sporozoite egress from oocysts. This is Plasmepsin VI from Plasmodium berghei (strain Anka).